Here is a 353-residue protein sequence, read N- to C-terminus: Lipase-specific foldase (353 aa).

Topologically, residues 1–19 are cytoplasmic; sequence MAQADRPARGGLAARPMRG. Residues 20 to 40 traverse the membrane as a helical segment; the sequence is ASFALAGLVACAACAAVVLWL. The Periplasmic portion of the chain corresponds to 41–353; it reads RPAAPSPAPA…AASLDRGAGG (313 aa).

This sequence belongs to the lipase chaperone family. As to quaternary structure, monomer. Interacts with lipase (lip).

The protein localises to the cell inner membrane. Its function is as follows. Involved in the folding of the extracellular lipase (lip) during its passage through the periplasm. This is Lipase-specific foldase from Burkholderia plantarii.